The chain runs to 142 residues: UPF0336 protein PPA1896 (142 aa).

Belongs to the UPF0336 family.

The sequence is that of UPF0336 protein PPA1896 from Cutibacterium acnes (strain DSM 16379 / KPA171202) (Propionibacterium acnes).